Here is a 332-residue protein sequence, read N- to C-terminus: tRNA-dihydrouridine synthase B (332 aa).

FMN-binding positions include 16–18 (PMA) and glutamine 70. Cysteine 100 acts as the Proton donor in catalysis. FMN is bound by residues lysine 139, 200–202 (NGD), and 224–225 (GR).

Belongs to the Dus family. DusB subfamily. It depends on FMN as a cofactor.

It carries out the reaction a 5,6-dihydrouridine in tRNA + NAD(+) = a uridine in tRNA + NADH + H(+). It catalyses the reaction a 5,6-dihydrouridine in tRNA + NADP(+) = a uridine in tRNA + NADPH + H(+). Functionally, catalyzes the synthesis of 5,6-dihydrouridine (D), a modified base found in the D-loop of most tRNAs, via the reduction of the C5-C6 double bond in target uridines. This Xanthomonas campestris pv. campestris (strain ATCC 33913 / DSM 3586 / NCPPB 528 / LMG 568 / P 25) protein is tRNA-dihydrouridine synthase B.